A 268-amino-acid polypeptide reads, in one-letter code: TodF product hydratase (268 aa).

The protein belongs to the hydratase/decarboxylase family.

It functions in the pathway xenobiotic degradation; toluene degradation. Its function is as follows. Converts the product of 2-hydroxy-6-oxo-2,4-heptadienoate hydrolase. This is TodF product hydratase (todJ) from Pseudomonas putida (strain ATCC 700007 / DSM 6899 / JCM 31910 / BCRC 17059 / LMG 24140 / F1).